A 262-amino-acid chain; its full sequence is Tryptophan synthase alpha chain (262 aa).

Residues Glu49 and Asp60 each act as proton acceptor in the active site.

It belongs to the TrpA family. Tetramer of two alpha and two beta chains.

It carries out the reaction (1S,2R)-1-C-(indol-3-yl)glycerol 3-phosphate + L-serine = D-glyceraldehyde 3-phosphate + L-tryptophan + H2O. It functions in the pathway amino-acid biosynthesis; L-tryptophan biosynthesis; L-tryptophan from chorismate: step 5/5. The alpha subunit is responsible for the aldol cleavage of indoleglycerol phosphate to indole and glyceraldehyde 3-phosphate. The sequence is that of Tryptophan synthase alpha chain from Caldanaerobacter subterraneus subsp. tengcongensis (strain DSM 15242 / JCM 11007 / NBRC 100824 / MB4) (Thermoanaerobacter tengcongensis).